The sequence spans 171 residues: Regulatory protein RecX (171 aa).

Belongs to the RecX family.

Its subcellular location is the cytoplasm. Its function is as follows. Modulates RecA activity. This is Regulatory protein RecX from Mycobacterium leprae (strain Br4923).